A 201-amino-acid polypeptide reads, in one-letter code: MAKHITGPEIERLIHLLARIPGLGPRSARRAALHLIKKKEALLEPLGTAIRDAVDKVRICSVCGNIDTTDPCSICTDPRRDNGTIIVVEDISDLWALERAGTLLARYHVLGGRLSPLDGIGPDELNITSLINRVIKDPITEIILAVNATIEGQTTAHYITDQLSNFSIKITRLAHGVPVGGELDYLDDGTLAAALRARTNF.

A C4-type zinc finger spans residues 60 to 75; the sequence is CSVCGNIDTTDPCSIC. The region spanning 83–178 is the Toprim domain; sequence GTIIVVEDIS…KITRLAHGVP (96 aa).

The protein belongs to the RecR family.

Functionally, may play a role in DNA repair. It seems to be involved in an RecBC-independent recombinational process of DNA repair. It may act with RecF and RecO. The sequence is that of Recombination protein RecR from Bartonella bacilliformis (strain ATCC 35685 / KC583 / Herrer 020/F12,63).